The sequence spans 236 residues: Segregation and condensation protein A (236 aa).

This sequence belongs to the ScpA family. Component of a cohesin-like complex composed of ScpA, ScpB and the Smc homodimer, in which ScpA and ScpB bind to the head domain of Smc. The presence of the three proteins is required for the association of the complex with DNA.

It is found in the cytoplasm. Participates in chromosomal partition during cell division. May act via the formation of a condensin-like complex containing Smc and ScpB that pull DNA away from mid-cell into both cell halves. In Streptococcus sanguinis (strain SK36), this protein is Segregation and condensation protein A.